A 193-amino-acid polypeptide reads, in one-letter code: Ion-translocating oxidoreductase complex subunit A (193 aa).

The next 6 membrane-spanning stretches (helical) occupy residues 4–24, 39–59, 72–92, 102–122, 134–154, and 171–191; these read LLLI…RFLG, LGMG…TWVL, LQTI…EMIV, SLGI…LAVL, LVFA…FAGL, and PIEL…AGLV.

Belongs to the NqrDE/RnfAE family. In terms of assembly, the complex is composed of six subunits: RnfA, RnfB, RnfC, RnfD, RnfE and RnfG.

The protein localises to the cell inner membrane. Its function is as follows. Part of a membrane-bound complex that couples electron transfer with translocation of ions across the membrane. The sequence is that of Ion-translocating oxidoreductase complex subunit A from Syntrophotalea carbinolica (strain DSM 2380 / NBRC 103641 / GraBd1) (Pelobacter carbinolicus).